Reading from the N-terminus, the 465-residue chain is Lysosomal dipeptide transporter MFSD1 (465 aa).

Positions 1 to 23 are disordered; it reads MEEEDEEARALLAGGPDEADRGA. Positions 11 to 12 match the Dileucine internalization motif motif; that stretch reads LL. 12 helical membrane-spanning segments follow: residues 39 to 59, 83 to 103, 113 to 133, 135 to 155, 170 to 191, 213 to 233, 266 to 286, 303 to 323, 331 to 351, 361 to 381, 392 to 412, and 418 to 438; these read LAHRLLVLLLMCFLGFGSYFC, LLYAWYSWPNVVLCFFGGFLI, TIIFSCFVCIGQVVFALGGIF, AFWLMEFGRFVFGIGGESLAV, LNLVFGLQLSMARIGSTVNMNL, ITLMIGGITCILSLICALALA, LWLIFIICVCYYVAVFPFIGL, SAINSVVYVISAPMSPVFGLL, IIWVLCAVAATLVSHMMLAFT, LLGLSYSLLACALWPMVAFVV, FMQSIQNLGLAIISIIAGMIL, and LFLEVFFIACVSLSLLSVVLL.

It belongs to the major facilitator superfamily. In terms of assembly, homodimer. Interacts with lysosomal protein GLMP (via lumenal domain); the interaction starts while both proteins are still in the endoplasmic reticulum and is required for stabilization of MFSD1 in lysosomes but has no direct effect on its targeting to lysosomes or transporter activity.

The protein localises to the lysosome membrane. It carries out the reaction L-alpha-aminoacyl-L-arginine(out) = L-alpha-aminoacyl-L-arginine(in). It catalyses the reaction L-arginyl-L-alpha-amino acid(out) = L-arginyl-L-alpha-amino acid(in). The enzyme catalyses L-arginyl-glycine(out) = L-arginyl-glycine(in). The catalysed reaction is L-alpha-aminoacyl-L-lysine(out) = L-alpha-aminoacyl-L-lysine(in). It carries out the reaction L-aspartyl-L-lysine(out) = L-aspartyl-L-lysine(in). It catalyses the reaction L-alanyl-L-lysine(out) = L-alanyl-L-lysine(in). The enzyme catalyses L-lysyl-L-alpha-amino acid(out) = L-lysyl-L-alpha-amino acid(in). The catalysed reaction is L-lysyl-L-alanine(out) = L-lysyl-L-alanine(in). It carries out the reaction L-lysyl-L-lysine(out) = L-lysyl-L-lysine(in). It catalyses the reaction L-lysyl-glycine(out) = L-lysyl-glycine(in). The enzyme catalyses L-alpha-aminoacyl-L-histidine(out) = L-alpha-aminoacyl-L-histidine(in). The catalysed reaction is L-histidyl-L-alpha-amino acid(out) = L-histidyl-L-alpha-amino acid(in). It carries out the reaction L-histidyl-glycine(out) = L-histidyl-glycine(in). Lysosomal dipeptide uniporter that selectively exports lysine, arginine or histidine-containing dipeptides with a net positive charge from the lysosome lumen into the cytosol. Could play a role in a specific type of protein O-glycosylation indirectly regulating macrophages migration and tissue invasion. Also essential for liver homeostasis. This is Lysosomal dipeptide transporter MFSD1 from Homo sapiens (Human).